We begin with the raw amino-acid sequence, 86 residues long: MKIRVNATIITDVEALKADKDLNHFKDYATCETFVVDADNHLKANEEISELLKGWDWWCIWSTRPLSKKDNQVFTLYNDDLYNLCR.

This is an uncharacterized protein from Bacillus subtilis (strain 168).